The chain runs to 398 residues: 1-deoxy-D-xylulose 5-phosphate reductoisomerase (398 aa).

The NADPH site is built by T10, G11, S12, I13, G36, K37, N38, and N124. Residue K125 participates in 1-deoxy-D-xylulose 5-phosphate binding. E126 is a binding site for NADPH. D150 contacts Mn(2+). Positions 151, 152, 186, and 209 each coordinate 1-deoxy-D-xylulose 5-phosphate. E152 lines the Mn(2+) pocket. G215 serves as a coordination point for NADPH. The 1-deoxy-D-xylulose 5-phosphate site is built by S222, N227, K228, and E231. E231 lines the Mn(2+) pocket.

It belongs to the DXR family. In terms of assembly, homodimer. The cofactor is Mg(2+). It depends on Mn(2+) as a cofactor.

It carries out the reaction 2-C-methyl-D-erythritol 4-phosphate + NADP(+) = 1-deoxy-D-xylulose 5-phosphate + NADPH + H(+). Its pathway is isoprenoid biosynthesis; isopentenyl diphosphate biosynthesis via DXP pathway; isopentenyl diphosphate from 1-deoxy-D-xylulose 5-phosphate: step 1/6. Catalyzes the NADPH-dependent rearrangement and reduction of 1-deoxy-D-xylulose-5-phosphate (DXP) to 2-C-methyl-D-erythritol 4-phosphate (MEP). The chain is 1-deoxy-D-xylulose 5-phosphate reductoisomerase from Shigella flexneri.